The chain runs to 102 residues: Colipase-like protein 2 (102 aa).

Residues 1-23 form the signal peptide; the sequence is MAFTQALVTVLALLAGTLPHRHS. Disulfide bonds link Cys-36-Cys-47, Cys-42-Cys-58, Cys-46-Cys-80, Cys-68-Cys-88, and Cys-82-Cys-99.

It belongs to the colipase family.

The protein localises to the secreted. In Mus musculus (Mouse), this protein is Colipase-like protein 2 (Clpsl2).